The following is a 392-amino-acid chain: tRNA-specific 2-thiouridylase MnmA (392 aa).

Residues 18-25 and leucine 44 contribute to the ATP site; that span reads AMSGGVDS. The active-site Nucleophile is the cysteine 112. Cysteine 112 and cysteine 208 are disulfide-bonded. Position 136 (glycine 136) interacts with ATP. Positions 158 to 160 are interaction with tRNA; that stretch reads RDQ. Cysteine 208 (cysteine persulfide intermediate) is an active-site residue.

The protein belongs to the MnmA/TRMU family.

The protein localises to the cytoplasm. It carries out the reaction S-sulfanyl-L-cysteinyl-[protein] + uridine(34) in tRNA + AH2 + ATP = 2-thiouridine(34) in tRNA + L-cysteinyl-[protein] + A + AMP + diphosphate + H(+). Catalyzes the 2-thiolation of uridine at the wobble position (U34) of tRNA, leading to the formation of s(2)U34. This Rhodospirillum centenum (strain ATCC 51521 / SW) protein is tRNA-specific 2-thiouridylase MnmA.